The sequence spans 326 residues: Phenylalanine--tRNA ligase alpha subunit (326 aa).

Mg(2+) is bound at residue E251.

The protein belongs to the class-II aminoacyl-tRNA synthetase family. Phe-tRNA synthetase alpha subunit type 1 subfamily. As to quaternary structure, tetramer of two alpha and two beta subunits. Mg(2+) serves as cofactor.

The protein resides in the cytoplasm. The catalysed reaction is tRNA(Phe) + L-phenylalanine + ATP = L-phenylalanyl-tRNA(Phe) + AMP + diphosphate + H(+). The protein is Phenylalanine--tRNA ligase alpha subunit of Pseudoalteromonas atlantica (strain T6c / ATCC BAA-1087).